A 495-amino-acid polypeptide reads, in one-letter code: Muscle LIM protein Mlp84B (495 aa).

Residues 12–63 (CPRCGKSVYAAEERLAGGYVFHKNCFKCGMCNKSLDSTNCTEHERELYCKTC) form the LIM zinc-binding 1 domain. Residues 66-71 (RKFGPK) carry the Nuclear localization signal motif. The region spanning 120-172 (CPRCGGYVYAAEQMLARGRSWHKECFKCGTCKKGLDSILCCEAPDKNIYCKGC) is the LIM zinc-binding 2 domain. A Nuclear localization signal motif is present at residues 175–180 (KKFGPK). LIM zinc-binding domains follow at residues 222–274 (CPRC…CRTC), 325–377 (CPRC…CRAC), and 421–473 (CPRC…CRAC).

As to expression, in the embryo, expression is restricted to the somatic, visceral, and pharyngeal muscles. Within the somatic musculature, expression is localized at the ends of muscles fibers at the point of attachment to the epidermis (at protein level). There is no expression in cardiac mesoderm or in fat body.

It localises to the cytoplasm. The protein localises to the nucleus. Functionally, plays a role in cell differentiation late in myogenesis. Transcription factor Mef2 is essential for expression. This is Muscle LIM protein Mlp84B from Drosophila melanogaster (Fruit fly).